The primary structure comprises 134 residues: Larval cuticle protein A3A (134 aa).

Repeat unit 1 spans residues 23–26 (AAPV). Positions 38–80 (DPHPQYSYGYDIQDGLTGDSKNQQETRDGDVVQGSYSLVDPDG) are disordered. The 67-residue stretch at 40-106 (HPQYSYGYDI…AVVHREPLVA (67 aa)) folds into the Chitin-binding type R&amp;R domain. Copy 2 of the repeat occupies 111-114 (AAPA).

In terms of biological role, component of the cuticle of the larva of Tenebrio molitor. The protein is Larval cuticle protein A3A of Tenebrio molitor (Yellow mealworm beetle).